Reading from the N-terminus, the 337-residue chain is DNA-directed RNA polymerase subunit alpha (337 aa).

The interval 1–233 (MIQKNWQELI…DQLSIFVNFE (233 aa)) is alpha N-terminal domain (alpha-NTD). Residues 249–337 (FNPALLKKVD…DLAKRYEDQY (89 aa)) are alpha C-terminal domain (alpha-CTD).

Belongs to the RNA polymerase alpha chain family. Homodimer. The RNAP catalytic core consists of 2 alpha, 1 beta, 1 beta' and 1 omega subunit. When a sigma factor is associated with the core the holoenzyme is formed, which can initiate transcription.

The enzyme catalyses RNA(n) + a ribonucleoside 5'-triphosphate = RNA(n+1) + diphosphate. Its function is as follows. DNA-dependent RNA polymerase catalyzes the transcription of DNA into RNA using the four ribonucleoside triphosphates as substrates. This is DNA-directed RNA polymerase subunit alpha from Brucella abortus (strain S19).